The sequence spans 166 residues: MNFLPKSRKARRRLTILAVAAPVVALAVGLALWGMRDAISLFYTPAQAAAAHVPAGRKVQLGGLVKAGSVVKHPDGLVEFVVADQRSTALVHYKGDLPDLFREGQGIVASGAFDESGTFVANQVLAKHDERYMPREVAKALKEQGEWRGDGQAPSYQGYKPGKPNT.

Topologically, residues 1-13 (MNFLPKSRKARRR) are cytoplasmic. Residues 14-34 (LTILAVAAPVVALAVGLALWG) traverse the membrane as a helical; Signal-anchor for type II membrane protein segment. The Periplasmic portion of the chain corresponds to 35–166 (MRDAISLFYT…QGYKPGKPNT (132 aa)). The heme site is built by His-128 and Tyr-132. Positions 143 to 166 (EQGEWRGDGQAPSYQGYKPGKPNT) are disordered.

Belongs to the CcmE/CycJ family.

It localises to the cell inner membrane. Heme chaperone required for the biogenesis of c-type cytochromes. Transiently binds heme delivered by CcmC and transfers the heme to apo-cytochromes in a process facilitated by CcmF and CcmH. This chain is Cytochrome c-type biogenesis protein CcmE, found in Caulobacter sp. (strain K31).